A 790-amino-acid chain; its full sequence is Disintegrin and metalloproteinase domain-containing protein 30 (790 aa).

A signal peptide spans 1 to 27; sequence MRSVQIFLSQCRLLLLLVPTMLLKSLG. The propeptide occupies 28-198; sequence EDVIFHPEGE…KARLRDFPGS (171 aa). The short motif at 170–177 is the Cysteine switch element; that stretch reads QVCGLSDD. Residue C172 coordinates Zn(2+). Residues 199-687 lie on the Extracellular side of the membrane; that stretch reads YKHPKYLELI…LRGAIPSSIW (489 aa). The 191-residue stretch at 203-393 folds into the Peptidase M12B domain; sequence KYLELILLFD…SGATCLNNIP (191 aa). N222 carries an N-linked (GlcNAc...) asparagine glycan. 3 disulfide bridges follow: C313–C388, C353–C373, and C355–C361. Zn(2+) is bound at residue H338. The active site involves E339. The Zn(2+) site is built by H342 and H348. N372, N438, N473, and N625 each carry an N-linked (GlcNAc...) asparagine glycan. One can recognise a Disintegrin domain in the interval 399-485; sequence LKRCGNKIVE…SCPNDVYKQD (87 aa). A disulfide bridge connects residues C457 and C477. The EGF-like domain maps to 629-663; the sequence is LQFDCLPEKCNTRGVCNNRKNCHCMYGWAPPFCEE. Disulfide bonds link C633-C644, C638-C650, and C652-C661. The helical transmembrane segment at 688-708 threads the bilayer; that stretch reads VVSIIMFRLILLILSVVFVFF. Residues 709–790 are Cytoplasmic-facing; that stretch reads RQVIGNHLKP…KAKSVKKQKK (82 aa). Residues 720–779 are compositionally biased toward basic and acidic residues; that stretch reads QEKMPLSKAKTEQEESKTKTVQEESKTKTGQEESEAKTGQEESKAKTGQEESKANIESKR. Positions 720–790 are disordered; it reads QEKMPLSKAK…KAKSVKKQKK (71 aa). 5 consecutive repeat copies span residues 732-740, 741-749, 750-758, 759-767, and 768-776. The tract at residues 732–776 is 5 X 9 AA approximate repeats; that stretch reads QEESKTKTVQEESKTKTGQEESEAKTGQEESKAKTGQEESKANIE. The span at 780–790 shows a compositional bias: basic residues; the sequence is PKAKSVKKQKK.

In terms of assembly, interacts with CTSD; this leads to activation of CTSD. Zn(2+) is required as a cofactor. Expressed in brain neurons (at protein level). Expressed in testis.

It is found in the late endosome membrane. Its function is as follows. Plays a role in lysosomal amyloid precursor protein (APP) processing by cleaving and activating CTSD/cathepsin D which leads to APP degradation. The sequence is that of Disintegrin and metalloproteinase domain-containing protein 30 (ADAM30) from Homo sapiens (Human).